Here is a 309-residue protein sequence, read N- to C-terminus: Metal ABC transporter substrate-binding lipoprotein FimA (309 aa).

Positions 1 to 20 are cleaved as a signal peptide; that stretch reads MKKIASVLALFVALLFGLLA. Cysteine 21 carries N-palmitoyl cysteine lipidation. A lipid anchor (S-diacylglycerol cysteine) is attached at cysteine 21. A divalent metal cation is bound by residues histidine 67, histidine 139, glutamate 205, and aspartate 280.

This sequence belongs to the bacterial solute-binding protein 9 family. Lipoprotein receptor antigen (Lrai) subfamily.

Its subcellular location is the cell membrane. Its function is as follows. Part of an ATP-binding cassette (ABC) transport system involved in metal import. Binds a metal with high affinity and specificity and delivers it to the membrane permease for translocation into the cytoplasm. Also acts as an adhesin which is involved on adherence to extracellular matrix. It is an important factor in pathogenesis and infection. May contribute to the formation and accumulation of dental plaque. The sequence is that of Metal ABC transporter substrate-binding lipoprotein FimA (fimA) from Streptococcus parasanguinis.